Here is a 272-residue protein sequence, read N- to C-terminus: Type III pantothenate kinase (272 aa).

D6 to V13 provides a ligand contact to ATP. G109 to R112 is a binding site for substrate. The Proton acceptor role is filled by D111. D131 serves as a coordination point for K(+). S134 provides a ligand contact to ATP. Residue T186 participates in substrate binding.

Belongs to the type III pantothenate kinase family. As to quaternary structure, homodimer. The cofactor is NH4(+). K(+) is required as a cofactor.

Its subcellular location is the cytoplasm. The enzyme catalyses (R)-pantothenate + ATP = (R)-4'-phosphopantothenate + ADP + H(+). Its pathway is cofactor biosynthesis; coenzyme A biosynthesis; CoA from (R)-pantothenate: step 1/5. In terms of biological role, catalyzes the phosphorylation of pantothenate (Pan), the first step in CoA biosynthesis. This is Type III pantothenate kinase from Mycobacterium bovis (strain BCG / Pasteur 1173P2).